The chain runs to 973 residues: Translation initiation factor IF-2 (973 aa).

Positions 97-135 are enriched in basic and acidic residues; it reads GHIDLDGGQHKKQQEEPKAKEEPKVKEEPKVKEEPKVKE. Disordered stretches follow at residues 97–343 and 353–372; these read GHID…EDVQ and LTNK…DKRD. Low complexity predominate over residues 136-155; that stretch reads APAAPAAQAPVKPAQPAQAP. 4 stretches are compositionally biased toward basic and acidic residues: residues 156–175, 183–204, 212–224, and 237–250; these read TEKK…KTVE, PKVE…DDNL, LESK…KIDL, and TKEE…EKQK. A compositionally biased stretch (low complexity) spans 252–266; sequence NNNRPGNNSNGPGAP. 2 stretches are compositionally biased toward basic and acidic residues: residues 315–326 and 333–343; these read PNRDDRPNNDRK and VKAEVSEEDVQ. Positions 472–642 constitute a tr-type G domain; sequence ARPPIVTVMG…LLEADLLDLK (171 aa). Positions 481–488 are G1; the sequence is GHVDHGKT. 481 to 488 lines the GTP pocket; sequence GHVDHGKT. The tract at residues 506 to 510 is G2; it reads GITQH. The segment at 528 to 531 is G3; the sequence is DTPG. GTP-binding positions include 528-532 and 582-585; these read DTPGH and NKID. The G4 stretch occupies residues 582 to 585; that stretch reads NKID. A G5 region spans residues 618-620; that stretch reads SAK.

The protein belongs to the TRAFAC class translation factor GTPase superfamily. Classic translation factor GTPase family. IF-2 subfamily.

It is found in the cytoplasm. Functionally, one of the essential components for the initiation of protein synthesis. Protects formylmethionyl-tRNA from spontaneous hydrolysis and promotes its binding to the 30S ribosomal subunits. Also involved in the hydrolysis of GTP during the formation of the 70S ribosomal complex. The chain is Translation initiation factor IF-2 from Parabacteroides distasonis (strain ATCC 8503 / DSM 20701 / CIP 104284 / JCM 5825 / NCTC 11152).